The primary structure comprises 146 residues: Nitric oxide reductase subunit C (146 aa).

A helical; Signal-anchor transmembrane segment spans residues 13 to 29; sequence IYFGGSVFFFLVFLGLT. Residues C61, C64, and H65 each contribute to the heme c site.

In terms of assembly, heterodimer of cytochromes b (large subunit) and c (small subunit).

The protein localises to the cell membrane. Component of the anaerobic respiratory chain that transforms nitrate to dinitrogen (denitrification). The sequence is that of Nitric oxide reductase subunit C (norC) from Stutzerimonas stutzeri (Pseudomonas stutzeri).